Here is a 286-residue protein sequence, read N- to C-terminus: Shikimate dehydrogenase (NADP(+)) (286 aa).

Shikimate is bound by residues 22-24 and threonine 69; that span reads SLS. The Proton acceptor role is filled by lysine 73. Residue glutamate 85 participates in NADP(+) binding. Asparagine 94 and aspartate 109 together coordinate shikimate. Residues 133-137 and valine 231 contribute to the NADP(+) site; that span reads GAGGA. Tyrosine 233 serves as a coordination point for shikimate. Glycine 254 contributes to the NADP(+) binding site.

The protein belongs to the shikimate dehydrogenase family. Homodimer.

The enzyme catalyses shikimate + NADP(+) = 3-dehydroshikimate + NADPH + H(+). The protein operates within metabolic intermediate biosynthesis; chorismate biosynthesis; chorismate from D-erythrose 4-phosphate and phosphoenolpyruvate: step 4/7. Functionally, involved in the biosynthesis of the chorismate, which leads to the biosynthesis of aromatic amino acids. Catalyzes the reversible NADPH linked reduction of 3-dehydroshikimate (DHSA) to yield shikimate (SA). This chain is Shikimate dehydrogenase (NADP(+)), found in Alkaliphilus metalliredigens (strain QYMF).